The chain runs to 1481 residues: ABC multidrug transporter atrH (1481 aa).

The segment covering Met1 to Leu10 has biased composition (basic and acidic residues). Disordered stretches follow at residues Met1–Gln45 and Ile61–Phe89. N-linked (GlcNAc...) asparagine glycosylation is found at Asn19, Asn76, and Asn320. The ABC transporter 1 domain occupies Ala134–Glu396. The chain crosses the membrane as a helical span at residues Met507 to Tyr527. Asn530 is a glycosylation site (N-linked (GlcNAc...) asparagine). The next 5 membrane-spanning stretches (helical) occupy residues Leu542–Trp562, Leu587–Phe607, Gly616–Phe636, Glu650–Val670, and Phe758–Leu778. The region spanning Phe838–Ser1081 is the ABC transporter 2 domain. Gly874–Thr881 is a binding site for ATP. Helical transmembrane passes span Tyr1174–Trp1194, Ile1210–Met1230, Ala1249–Ala1269, Leu1298–Ile1318, Ile1327–Val1347, and Ala1358–Val1378. Asn1395 carries N-linked (GlcNAc...) asparagine glycosylation. A helical transmembrane segment spans residues Val1446 to Leu1466.

It belongs to the ABC transporter superfamily. ABCG family. PDR (TC 3.A.1.205) subfamily.

It localises to the cell membrane. In terms of biological role, pleiotropic ABC efflux transporter involved in the basal level of azole susceptibility. The sequence is that of ABC multidrug transporter atrH from Aspergillus oryzae (strain ATCC 42149 / RIB 40) (Yellow koji mold).